The following is a 306-amino-acid chain: MSNVYERWKEFYEDAISRDIPGVKTAEKIAYFGIGGSGIPGEVLKLLDLPVEYKLFRSYKVNVDSKTTVVAVSYSGNTAETLAGVKRAQELGVKEIIVITSGGKLKEIAESKGYPLLSLPQGYQTRFIFPYIFTYLVRILNQSTGSNYRVQDLVDGIQDNFTMLSEVSTRIANRITGKVPIFYASDLLPIAERFKQEVNENAKYPAFFSQLPEANHNEIELYSSQQGNQFIPIVIPSDKIDEATASLINAELIYPPYKSILKNISGMFLIAGLASVKLASQLNIKAEELRIIPKIRERTHNLLMGG.

The 135-residue stretch at 19-153 (DIPGVKTAEK…TGSNYRVQDL (135 aa)) folds into the SIS domain. E200 (proton acceptor) is an active-site residue. The active-site Proton donor is H216. The active-site Proton acceptor is the R296.

Belongs to the PGI/PMI family.

The enzyme catalyses D-glucosamine 6-phosphate = D-galactosamine 6-phosphate. Involved in the synthesis of UDP-N-acetylgalactosamine (UDP-GalNAc). Catalyzes the conversion of glucosamine-6-phosphate (GlcN-6-P) to galactosamine-6-phosphate (GalN-6-P). The polypeptide is D-glucosamine-6-phosphate 4-epimerase (Sulfolobus acidocaldarius (strain ATCC 33909 / DSM 639 / JCM 8929 / NBRC 15157 / NCIMB 11770)).